The following is a 144-amino-acid chain: Cathelicidin-4 (144 aa).

An N-terminal signal peptide occupies residues 1-29 (MQTQRASLSLGRWSLWLLLLGLVVPSASA). The propeptide occupies 30-130 (QALSYREAVL…DLNCNELQSV (101 aa)). Disulfide bonds link Cys-85–Cys-96 and Cys-107–Cys-124. Arg-143 is modified (arginine amide).

The protein belongs to the cathelicidin family. In terms of processing, elastase might be responsible for its maturation. Large granules of neutrophils.

It localises to the secreted. Potent microbicidal activity; active against S.aureus and E.coli. This is Cathelicidin-4 (CATHL4) from Bos taurus (Bovine).